Here is a 337-residue protein sequence, read N- to C-terminus: MQTIPIKHVGNDPLVDAFQRRYYYLRLSITDVCNFRCNYCLPNGYQPESNKPSFLTLNEIRLVVKSFANMGTEKVRITGGEPTLRKDFLPIVETIAQNPTIKQIALTTNGYRMAKDVAAWKEAGITSINVSIDSLDARMFHRITGIDKFEDVMRGLERAFEVGYQKIKVNSVLMRDLNDADFNQFLTWIKDKPIQMRFIELMQTGEMDHFFQQHHVSGQLLADKLINAGWTLQSKGLLDGPAKVFKHPDYVGEVGLIMPYEKNFCASCNRLRVSAKGKLHLCLFGEEGITLRDLLQSDDQQLQLQARISSALQGKREHHFLHQGDSGVRANLASIGG.

In terms of domain architecture, Radical SAM core spans 17 to 242 (AFQRRYYYLR…QSKGLLDGPA (226 aa)). Residue arginine 26 coordinates GTP. Positions 33 and 37 each coordinate [4Fe-4S] cluster. S-adenosyl-L-methionine is bound at residue tyrosine 39. Residue cysteine 40 participates in [4Fe-4S] cluster binding. Arginine 76 contributes to the GTP binding site. Glycine 80 contributes to the S-adenosyl-L-methionine binding site. Threonine 107 is a binding site for GTP. Residue serine 131 coordinates S-adenosyl-L-methionine. Residue lysine 168 coordinates GTP. An S-adenosyl-L-methionine-binding site is contributed by methionine 202. Cysteine 265 and cysteine 268 together coordinate [4Fe-4S] cluster. 270–272 (RLR) serves as a coordination point for GTP. Cysteine 282 contributes to the [4Fe-4S] cluster binding site.

The protein belongs to the radical SAM superfamily. MoaA family. Monomer and homodimer. It depends on [4Fe-4S] cluster as a cofactor.

It catalyses the reaction GTP + AH2 + S-adenosyl-L-methionine = (8S)-3',8-cyclo-7,8-dihydroguanosine 5'-triphosphate + 5'-deoxyadenosine + L-methionine + A + H(+). It functions in the pathway cofactor biosynthesis; molybdopterin biosynthesis. Functionally, catalyzes the cyclization of GTP to (8S)-3',8-cyclo-7,8-dihydroguanosine 5'-triphosphate. In Pasteurella multocida (strain Pm70), this protein is GTP 3',8-cyclase.